The primary structure comprises 796 residues: Lon protease (796 aa).

One can recognise a Lon N-terminal domain in the interval 19 to 213 (LPVVVTRGIF…LLKELIINRP (195 aa)). 376-383 (GPPGVGKT) contacts ATP. The Lon proteolytic domain maps to 612-793 (ESQVGVVTGL…EDVYEIIFKN (182 aa)). Active-site residues include S699 and K742.

This sequence belongs to the peptidase S16 family. As to quaternary structure, homohexamer. Organized in a ring with a central cavity.

It localises to the cytoplasm. It carries out the reaction Hydrolysis of proteins in presence of ATP.. In terms of biological role, ATP-dependent serine protease that mediates the selective degradation of mutant and abnormal proteins as well as certain short-lived regulatory proteins. Required for cellular homeostasis and for survival from DNA damage and developmental changes induced by stress. Degrades polypeptides processively to yield small peptide fragments that are 5 to 10 amino acids long. Binds to DNA in a double-stranded, site-specific manner. The sequence is that of Lon protease from Mycoplasma mycoides subsp. mycoides SC (strain CCUG 32753 / NCTC 10114 / PG1).